The following is a 447-amino-acid chain: Glucose-6-phosphate isomerase (447 aa).

Glu287 functions as the Proton donor in the catalytic mechanism. Residues His308 and Lys422 contribute to the active site.

This sequence belongs to the GPI family.

It is found in the cytoplasm. It catalyses the reaction alpha-D-glucose 6-phosphate = beta-D-fructose 6-phosphate. It participates in carbohydrate biosynthesis; gluconeogenesis. The protein operates within carbohydrate degradation; glycolysis; D-glyceraldehyde 3-phosphate and glycerone phosphate from D-glucose: step 2/4. Catalyzes the reversible isomerization of glucose-6-phosphate to fructose-6-phosphate. The sequence is that of Glucose-6-phosphate isomerase from Heliobacterium modesticaldum (strain ATCC 51547 / Ice1).